A 363-amino-acid chain; its full sequence is Chorismate synthase (363 aa).

The NADP(+) site is built by R48 and R54. FMN-binding positions include 131–133 (RSS), 244–245 (NA), G288, 303–307 (KPTSS), and R329.

Belongs to the chorismate synthase family. Homotetramer. FMNH2 serves as cofactor.

It carries out the reaction 5-O-(1-carboxyvinyl)-3-phosphoshikimate = chorismate + phosphate. It participates in metabolic intermediate biosynthesis; chorismate biosynthesis; chorismate from D-erythrose 4-phosphate and phosphoenolpyruvate: step 7/7. Its function is as follows. Catalyzes the anti-1,4-elimination of the C-3 phosphate and the C-6 proR hydrogen from 5-enolpyruvylshikimate-3-phosphate (EPSP) to yield chorismate, which is the branch point compound that serves as the starting substrate for the three terminal pathways of aromatic amino acid biosynthesis. This reaction introduces a second double bond into the aromatic ring system. This Hyphomonas neptunium (strain ATCC 15444) protein is Chorismate synthase.